Here is a 299-residue protein sequence, read N- to C-terminus: ATP phosphoribosyltransferase (299 aa).

This sequence belongs to the ATP phosphoribosyltransferase family. Long subfamily. Equilibrium between an active dimeric form, an inactive hexameric form and higher aggregates. Interconversion between the various forms is largely reversible and is influenced by the natural substrates and inhibitors of the enzyme. Mg(2+) is required as a cofactor.

It localises to the cytoplasm. It carries out the reaction 1-(5-phospho-beta-D-ribosyl)-ATP + diphosphate = 5-phospho-alpha-D-ribose 1-diphosphate + ATP. Its pathway is amino-acid biosynthesis; L-histidine biosynthesis; L-histidine from 5-phospho-alpha-D-ribose 1-diphosphate: step 1/9. Feedback inhibited by histidine. Catalyzes the condensation of ATP and 5-phosphoribose 1-diphosphate to form N'-(5'-phosphoribosyl)-ATP (PR-ATP). Has a crucial role in the pathway because the rate of histidine biosynthesis seems to be controlled primarily by regulation of HisG enzymatic activity. The protein is ATP phosphoribosyltransferase of Escherichia coli O157:H7.